Consider the following 542-residue polypeptide: Chondroitin sulfate N-acetylgalactosaminyltransferase 2 (542 aa).

Residues 1–11 (MPRRGLILHTR) are Cytoplasmic-facing. The helical; Signal-anchor for type II membrane protein transmembrane segment at 12–32 (THWLLLGLALLCSLVLFMYLL) threads the bilayer. Over 33–542 (ECAPQTDGNA…AYRTNSEAVG (510 aa)) the chain is Lumenal. Asn41 carries N-linked (GlcNAc...) asparagine glycosylation. Positions 59–105 (ALLQEQEEHYQTRATSLKRQIAQLKQELQEMSEKMRSLQERRNVGAN) form a coiled coil. Asn333 carries an N-linked (GlcNAc...) asparagine glycan. Asp369 and His486 together coordinate a divalent metal cation.

Belongs to the chondroitin N-acetylgalactosaminyltransferase family. Ubiquitous.

The protein localises to the golgi apparatus. The protein resides in the golgi stack membrane. It carries out the reaction 3-O-(beta-D-GlcA-(1-&gt;3)-beta-D-Gal-(1-&gt;3)-beta-D-Gal-(1-&gt;4)-beta-D-Xyl)-L-seryl-[protein] + UDP-N-acetyl-alpha-D-galactosamine = 3-O-(beta-D-GalNAc-(1-&gt;4)-beta-D-GlcA-(1-&gt;3)-beta-D-Gal-(1-&gt;3)-beta-D-Gal-(1-&gt;4)-beta-D-Xyl)-L-seryl-[protein] + UDP + H(+). Functionally, transfers 1,4-N-acetylgalactosamine (GalNAc) from UDP-GalNAc to the non-reducing end of glucuronic acid (GlcUA). Required for addition of the first GalNAc to the core tetrasaccharide linker and for elongation of chondroitin chains. This chain is Chondroitin sulfate N-acetylgalactosaminyltransferase 2 (CSGALNACT2), found in Homo sapiens (Human).